The chain runs to 176 residues: Lipoprotein signal peptidase (176 aa).

The next 4 helical transmembrane spans lie at 26 to 46 (LWMA…IVIV), 60 to 80 (FFNL…ADAG), 82 to 102 (WQRW…VWLL), and 107 to 127 (GQKL…GNVV). Catalysis depends on residues D137 and D155. Residues 147-167 (HWPAFNVADCAITVGAVLLIV) traverse the membrane as a helical segment.

The protein belongs to the peptidase A8 family.

Its subcellular location is the cell inner membrane. The catalysed reaction is Release of signal peptides from bacterial membrane prolipoproteins. Hydrolyzes -Xaa-Yaa-Zaa-|-(S,diacylglyceryl)Cys-, in which Xaa is hydrophobic (preferably Leu), and Yaa (Ala or Ser) and Zaa (Gly or Ala) have small, neutral side chains.. The protein operates within protein modification; lipoprotein biosynthesis (signal peptide cleavage). This protein specifically catalyzes the removal of signal peptides from prolipoproteins. The protein is Lipoprotein signal peptidase of Cupriavidus pinatubonensis (strain JMP 134 / LMG 1197) (Cupriavidus necator (strain JMP 134)).